Here is a 344-residue protein sequence, read N- to C-terminus: Acyl-CoA ligase clz12 (344 aa).

AMP-binding regions lie at residues 2-239 (VQRS…IIKV) and 248-322 (ELET…PSGK).

This sequence belongs to the ATP-dependent AMP-binding enzyme family.

Its pathway is secondary metabolite biosynthesis. Acyl-CoA ligase; part of the gene cluster that mediates the biosynthesis of squalestatin S1 (SQS1, also known as zaragozic acid A), a heavily oxidized fungal polyketide that offers potent cholesterol lowering activity by targeting squalene synthase (SS). SQS1 is composed of a 2,8-dioxobicyclic[3.2.1]octane-3,4,5-tricarboxyclic acid core that is connected to two lipophilic polyketide arms. These initial steps feature the priming of an unusual benzoic acid starter unit onto the highly reducing polyketide synthase clz14, followed by oxaloacetate extension and product release to generate a tricarboxylic acid containing product. The phenylalanine ammonia lyase (PAL) clz10 and the acyl-CoA ligase clz12 are involved in transforming phenylalanine into benzoyl-CoA. The citrate synthase-like protein clz17 is involved in connecting the C-alpha-carbons of the hexaketide chain and oxaloacetate to afford the tricarboxylic acid unit. The potential hydrolytic enzymes, clz11 and clz13, are in close proximity to pks2 and may participate in product release. On the other side, the tetraketide arm is synthesized by a the squalestatin tetraketide synthase clz2 and enzymatically esterified to the core in the last biosynthetic step, by the acetyltransferase clz6. The biosynthesis of the tetraketide must involve 3 rounds of chain extension. After the first and second rounds methyl-transfer occurs, and in all rounds of extension the ketoreductase and dehydratase are active. The enoyl reductase and C-MeT of clz2 are not active in the final round of extension. The acetyltransferase clz6 appears to have a broad substrate selectivity for its acyl CoA substrate, allowing the in vitro synthesis of novel squalestatins. The biosynthesis of SQS1 requires several oxidative steps likely performed by oxidoreductases clz3, clz15 and clz16. Finally, in support of the identification of the cluster as being responsible for SQS1 production, the cluster contains a gene encoding a putative squalene synthase (SS) clz20, suggesting a likely mechanism for self-resistance. The protein is Acyl-CoA ligase clz12 of Cochliobolus lunatus (Filamentous fungus).